The following is a 210-amino-acid chain: Protein GrpE (210 aa).

The interval 1-71 is disordered; that stretch reads MSEKDQSVNN…DTKIKELEKL (71 aa). A compositionally biased stretch (acidic residues) spans 11–23; the sequence is TEEDFNVETEDNQ. The segment covering 24-35 has biased composition (polar residues); that stretch reads NDTNIENSVSNT. Positions 36–46 are enriched in low complexity; it reads DNSEANASDSE. Positions 47 to 60 are enriched in acidic residues; that stretch reads NNSEESIKDEESES. Residues 61–71 are compositionally biased toward basic and acidic residues; that stretch reads QDTKIKELEKL.

This sequence belongs to the GrpE family. Homodimer.

The protein resides in the cytoplasm. Participates actively in the response to hyperosmotic and heat shock by preventing the aggregation of stress-denatured proteins, in association with DnaK and GrpE. It is the nucleotide exchange factor for DnaK and may function as a thermosensor. Unfolded proteins bind initially to DnaJ; upon interaction with the DnaJ-bound protein, DnaK hydrolyzes its bound ATP, resulting in the formation of a stable complex. GrpE releases ADP from DnaK; ATP binding to DnaK triggers the release of the substrate protein, thus completing the reaction cycle. Several rounds of ATP-dependent interactions between DnaJ, DnaK and GrpE are required for fully efficient folding. This is Protein GrpE from Staphylococcus epidermidis (strain ATCC 35984 / DSM 28319 / BCRC 17069 / CCUG 31568 / BM 3577 / RP62A).